The sequence spans 162 residues: RNA pyrophosphohydrolase (162 aa).

The region spanning 7–149 is the Nudix hydrolase domain; the sequence is EYRPCVGIML…KKEVYKKVIE (143 aa). The Nudix box motif lies at 40–61; the sequence is GGVDEGEELEQAALRELLEEVG.

The protein belongs to the Nudix hydrolase family. RppH subfamily. It depends on a divalent metal cation as a cofactor.

Accelerates the degradation of transcripts by removing pyrophosphate from the 5'-end of triphosphorylated RNA, leading to a more labile monophosphorylated state that can stimulate subsequent ribonuclease cleavage. The polypeptide is RNA pyrophosphohydrolase (Wolbachia pipientis subsp. Culex pipiens (strain wPip)).